The primary structure comprises 220 residues: Ribosomal RNA large subunit methyltransferase E (220 aa).

5 residues coordinate S-adenosyl-L-methionine: Gly60, Trp62, Asp92, Asp108, and Asp133. Lys173 acts as the Proton acceptor in catalysis. The interval 195 to 220 (APRKPKASRDKSSETFILGRHLKRPR) is disordered.

This sequence belongs to the class I-like SAM-binding methyltransferase superfamily. RNA methyltransferase RlmE family.

Its subcellular location is the cytoplasm. The enzyme catalyses uridine(2552) in 23S rRNA + S-adenosyl-L-methionine = 2'-O-methyluridine(2552) in 23S rRNA + S-adenosyl-L-homocysteine + H(+). Specifically methylates the uridine in position 2552 of 23S rRNA at the 2'-O position of the ribose in the fully assembled 50S ribosomal subunit. This is Ribosomal RNA large subunit methyltransferase E from Burkholderia lata (strain ATCC 17760 / DSM 23089 / LMG 22485 / NCIMB 9086 / R18194 / 383).